The sequence spans 159 residues: Ribose-5-phosphate isomerase B (159 aa).

Residues 8–9 and 67–71 contribute to the D-ribulose 5-phosphate site; these read DH and GSGNG. Catalysis depends on glutamate 72, which acts as the Proton acceptor. Histidine 99 acts as the Proton donor in catalysis. 4 residues coordinate D-ribulose 5-phosphate: asparagine 100, arginine 110, arginine 134, and arginine 138.

Belongs to the LacAB/RpiB family. Homodimer.

It catalyses the reaction aldehydo-D-ribose 5-phosphate = D-ribulose 5-phosphate. It functions in the pathway carbohydrate degradation; pentose phosphate pathway; D-ribose 5-phosphate from D-ribulose 5-phosphate (non-oxidative stage): step 1/1. In terms of biological role, catalyzes the interconversion of ribulose-5-P and ribose-5-P. The chain is Ribose-5-phosphate isomerase B from Mycolicibacterium paratuberculosis (strain ATCC BAA-968 / K-10) (Mycobacterium paratuberculosis).